The primary structure comprises 152 residues: Protein SprT-like (152 aa).

Residues 7-148 form the SprT-like domain; that stretch reads QRLVEEVSLQ…GKCKGKLNLI (142 aa). A Zn(2+)-binding site is contributed by histidine 67. Glutamate 68 is an active-site residue. Histidine 71 is a binding site for Zn(2+).

This sequence belongs to the SprT family. It depends on Zn(2+) as a cofactor.

It localises to the cytoplasm. The protein is Protein SprT-like of Bacillus anthracis (strain A0248).